The chain runs to 365 residues: Glycerol dehydrogenase (365 aa).

Residues Asp-37, Gly-94, Lys-95, Thr-116, and Ser-119 each coordinate NAD(+). Asp-121 serves as a coordination point for glycerol. NAD(+)-binding residues include Ser-125, Leu-127, and Tyr-131. Residues Asp-171, His-254, and His-271 each coordinate Mn(2+). His-254 is a glycerol binding site.

Belongs to the iron-containing alcohol dehydrogenase family. Homohexamer. Mn(2+) is required as a cofactor.

It carries out the reaction glycerol + NAD(+) = dihydroxyacetone + NADH + H(+). The enzyme catalyses hydroxyacetone + NADH + H(+) = (S)-propane-1,2-diol + NAD(+). It functions in the pathway polyol metabolism; glycerol fermentation; glycerone phosphate from glycerol (oxidative route): step 1/2. Its activity is regulated as follows. Inhibited by zinc. In terms of biological role, catalyzes the NAD-dependent oxidation of glycerol to dihydroxyacetone (glycerone). Allows microorganisms to utilize glycerol as a source of carbon under anaerobic conditions. Exhibits a rather broad substrate specificity since it can also oxidize 1,2-propanediol and 2,3-butanediol and reduce dihydroxyacetone. Cannot use NADP(+) as an electron acceptor for the oxidation of glycerol. The polypeptide is Glycerol dehydrogenase (Citrobacter freundii).